Here is a 146-residue protein sequence, read N- to C-terminus: Large ribosomal subunit protein uL15 (146 aa).

The interval Met-1–Pro-65 is disordered. Gly residues predominate over residues Arg-24–Ala-34.

This sequence belongs to the universal ribosomal protein uL15 family. As to quaternary structure, part of the 50S ribosomal subunit.

Functionally, binds to the 23S rRNA. This Bordetella avium (strain 197N) protein is Large ribosomal subunit protein uL15.